Reading from the N-terminus, the 259-residue chain is Ovulation prohormone (259 aa).

Residues 1–34 (MKMSGLLSKPDYGVVGIVFTVVFCCWCSSSTTHA) form the signal peptide. Positions 35 to 102 (LSIAEPGRDR…SGEKTRLTAA (68 aa)) are excised as a propeptide. Positions 42-103 (RDRYDKRSPT…GEKTRLTAAK (62 aa)) are disordered. 2 repeats span residues 119–123 (RLRFH) and 146–150 (RLRFH). Residues 119–150 (RLRFHKRRVDSADESNDDGFDRKAREPRLRFH) are 2 X 5 AA repeats of R-L-R-F-H. A disordered region spans residues 149–197 (FHDVRKRSATAEEGSENAEIEESHLGNSRSRRSAGSAPSSANEVQRSKR). Residues 181-195 (SAGSAPSSANEVQRS) constitute a propeptide that is removed on maturation. L233 bears the Leucine amide mark. Residues 237–259 (GSAFFDHIPIIFGEPQYDYQPFK) constitute a propeptide that is removed on maturation.

Belongs to the molluscan ELH family.

It localises to the secreted. Its function is as follows. CDCH induces ovulation and egg-mass production; it may also stimulate synthesis of secretory products in the female accessory sex glands and affect neurons in the neuronal circuits controlling locomotion and feeding. Functionally, calfluxin is involved in the influx of calcium into mitochondria of the albumen gland. In terms of biological role, CDCA (or alpha-CDCP) triggers the electrical activity of the caudodorsal cells (CDCS). This is Ovulation prohormone from Lymnaea stagnalis (Great pond snail).